The following is a 387-amino-acid chain: ATP phosphoribosyltransferase regulatory subunit (387 aa).

Belongs to the class-II aminoacyl-tRNA synthetase family. HisZ subfamily. Heteromultimer composed of HisG and HisZ subunits.

It is found in the cytoplasm. It functions in the pathway amino-acid biosynthesis; L-histidine biosynthesis; L-histidine from 5-phospho-alpha-D-ribose 1-diphosphate: step 1/9. In terms of biological role, required for the first step of histidine biosynthesis. May allow the feedback regulation of ATP phosphoribosyltransferase activity by histidine. This Psychrobacter cryohalolentis (strain ATCC BAA-1226 / DSM 17306 / VKM B-2378 / K5) protein is ATP phosphoribosyltransferase regulatory subunit.